The chain runs to 640 residues: Probable potassium transport system protein Kup 1 (640 aa).

A run of 12 helical transmembrane segments spans residues 24–44 (LGAL…TSPL), 67–87 (IASL…VLFV), 116–136 (VGPL…DGMI), 154–174 (PFFA…LFTI), 186–206 (FGPV…TEVV), 222–242 (TFLF…VLAV), 264–284 (WFAL…ALIL), 296–316 (MLVP…ATVI), 354–374 (IYIP…VVGF), 382–402 (AAYG…ALVV), 411–431 (LWLC…FLGA), and 436–456 (VTQG…LMAT).

The protein belongs to the HAK/KUP transporter (TC 2.A.72) family.

The protein resides in the cell inner membrane. It catalyses the reaction K(+)(in) + H(+)(in) = K(+)(out) + H(+)(out). Its function is as follows. Transport of potassium into the cell. Likely operates as a K(+):H(+) symporter. The protein is Probable potassium transport system protein Kup 1 of Paramagnetospirillum magneticum (strain ATCC 700264 / AMB-1) (Magnetospirillum magneticum).